Reading from the N-terminus, the 205-residue chain is MSKRVQAKHKLDRRMGQNIWGRPKSPVNRREYGPGQHGQRRKGKMSDFGTQLRAKQKLKGYYGNITEKQFRRYYAEAIRLRGDSGENLIGLLERRLDAVVYRSKFVATPFAARQFVNHGHIKVNGRRVNIPSYQVKAGDVIEVKEASRQLEIVVVASQLAERDVPDYIEVDHHKMTARVTRIPGLTEVPYPVQMEPNLVIEFYSR.

Positions 1–12 are enriched in basic residues; sequence MSKRVQAKHKLD. Positions 1 to 49 are disordered; it reads MSKRVQAKHKLDRRMGQNIWGRPKSPVNRREYGPGQHGQRRKGKMSDFG. In terms of domain architecture, S4 RNA-binding spans 94–155; sequence RRLDAVVYRS…ASRQLEIVVV (62 aa).

Belongs to the universal ribosomal protein uS4 family. Part of the 30S ribosomal subunit. Contacts protein S5. The interaction surface between S4 and S5 is involved in control of translational fidelity.

Functionally, one of the primary rRNA binding proteins, it binds directly to 16S rRNA where it nucleates assembly of the body of the 30S subunit. Its function is as follows. With S5 and S12 plays an important role in translational accuracy. The chain is Small ribosomal subunit protein uS4 from Methylorubrum extorquens (strain CM4 / NCIMB 13688) (Methylobacterium extorquens).